Consider the following 510-residue polypeptide: MEFTENYNPKNKPIMVLGTSSGAGKSLTVTAICRILKKLGEEPIPFKGQNMSNNAWVDSNGGEMAYSQALQAFSCGINPSSEMNPILLKPQGDSTSEVIHLGKSVGISTAKDYYKDWFMPGWEVIKKSINIIYEKNKNCRLIIEGAGSPVEMNLIHRDLTNLRVAKYLDASCILVTDIERGGVFAQIIGTLELMKPEERKLIKGILINRFRGDLSLFKEGKKWIEDKTKIPVLGIIPWLNDKFPPEDSLDLLERKSYLSNPEIKVGIIKLPSISNFSDFDPLENENSILIEWISEAQNLNQFDFIIIPGSKQTIKDQLFLNESGLSKEIKNYSHNNGNIFGICGGLQMLGTVLEDPFFKEGSNFNSDQSIKGIGLLPLKTTFLKHKITRQIHSESIWPNSTKIIGFEIHNGITKLDSSHLDTLKTNHIFKDFDLGWYKENREGGTIAGTYIHGIFENDEWRDHYINLIRKTKNKLTLDKKSRSYKMKRESIINNLANEFNNHFNISLLLN.

In terms of domain architecture, GATase cobBQ-type spans 262–460; that stretch reads EIKVGIIKLP…IHGIFENDEW (199 aa). C343 serves as the catalytic Nucleophile. The active site involves H452.

The protein belongs to the CobB/CobQ family. CobQ subfamily.

It participates in cofactor biosynthesis; adenosylcobalamin biosynthesis. Functionally, catalyzes amidations at positions B, D, E, and G on adenosylcobyrinic A,C-diamide. NH(2) groups are provided by glutamine, and one molecule of ATP is hydrogenolyzed for each amidation. The polypeptide is Cobyric acid synthase (Prochlorococcus marinus (strain MIT 9515)).